The sequence spans 167 residues: Photosystem I assembly protein Ycf3 (167 aa).

TPR repeat units lie at residues 35 to 68, 72 to 105, and 120 to 153; these read AFSY…EEDP, SFIL…NNKL, and AVKA…APSN.

This sequence belongs to the Ycf3 family.

Its subcellular location is the plastid. It is found in the chloroplast thylakoid membrane. In terms of biological role, essential for the assembly of the photosystem I (PSI) complex. May act as a chaperone-like factor to guide the assembly of the PSI subunits. This chain is Photosystem I assembly protein Ycf3, found in Galdieria sulphuraria (Red alga).